Reading from the N-terminus, the 443-residue chain is UDP-N-acetylmuramate--L-alanine ligase (443 aa).

Residue 110-116 participates in ATP binding; sequence GAHGKTS.

This sequence belongs to the MurCDEF family.

It localises to the cytoplasm. The catalysed reaction is UDP-N-acetyl-alpha-D-muramate + L-alanine + ATP = UDP-N-acetyl-alpha-D-muramoyl-L-alanine + ADP + phosphate + H(+). It participates in cell wall biogenesis; peptidoglycan biosynthesis. Functionally, cell wall formation. This Streptococcus agalactiae serotype Ia (strain ATCC 27591 / A909 / CDC SS700) protein is UDP-N-acetylmuramate--L-alanine ligase.